The sequence spans 295 residues: NADPH-dependent reductive aminase (295 aa).

An N-terminal signal peptide occupies residues 1 to 18 (MSKHIGIFGLGAMGTALA). Position 6–20 (6–20 (GIFGLGAMGTALAAK)) interacts with NADP(+).

This sequence belongs to the HIBADH-related family. In terms of assembly, homodimer. It depends on NADPH as a cofactor.

In terms of biological role, NADPH-dependent reductive aminase that catalyzes the reductive coupling of a broad set of carbonyl compounds with a variety of primary and secondary amines. Possesses remarkably high activity for the reductive amination of ketones and amines, often with high stereoselectivity and in some cases with ketone:amine ratios as low as 1:1. The cofactor NADPH, the carbonyl compound and the amine are added to the enzyme in that sequence, followed by the release of product, NADP(+) being released at last. RedAm is also able to act in the reverse, oxidative direction and exhibits activity in the dehydrogenation of amines to yield imines. The highest activity is found for 1-methyl-tetrahydroquinoline and acyclic amines are also found to be transformed. This Aspergillus oryzae (strain ATCC 42149 / RIB 40) (Yellow koji mold) protein is NADPH-dependent reductive aminase.